The chain runs to 86 residues: Progonadoliberin IIA (86 aa).

A signal peptide spans 1–24 (MVHICRLFVVMGMLLCLSAQFASS). Position 25 is a pyrrolidone carboxylic acid (Gln25). A Glycine amide modification is found at Gly34.

The protein belongs to the GnRH family. In terms of tissue distribution, olfactory bulbs, hypothalamus and telencephalon, midbrain and posterior brain areas.

The protein localises to the secreted. Stimulates the secretion of gonadotropins. The sequence is that of Progonadoliberin IIA (gnrh2a) from Carassius auratus (Goldfish).